The chain runs to 278 residues: Chitosanase (278 aa).

A signal peptide spans 1-40 (MHSQHRTARIALAVVLTAIPASLATAGVGYASTQASTAVK). The active-site Proton donor is glutamate 62. Aspartate 80 functions as the Nucleophile in the catalytic mechanism.

The protein belongs to the glycosyl hydrolase 46 family.

It localises to the secreted. The catalysed reaction is Endohydrolysis of beta-(1-&gt;4)-linkages between D-glucosamine residues in a partly acetylated chitosan.. In terms of biological role, aids in the defense against invading fungal pathogens by degrading their cell wall chitosan. The protein is Chitosanase (csn) of Streptomyces sp. (strain N174).